Consider the following 810-residue polypeptide: Volume-regulated anion channel subunit LRRC8A (810 aa).

M1 bears the N-acetylmethionine mark. The Cytoplasmic portion of the chain corresponds to 1-23 (MIPVTELRYFADTQPAYRILKPW). A helical transmembrane segment spans residues 24–47 (WDVFTDYISIVMLMIAVFGGTLQV). At 48-123 (TQDKMICLPC…YENRLHWFAK (76 aa)) the chain is on the extracellular side. 3 cysteine pairs are disulfide-bonded: C54/C310, C57/C65, and C113/C295. N-linked (GlcNAc...) asparagine glycosylation is found at N66 and N83. A helical transmembrane segment spans residues 124–142 (YFPYLVLLHTLIFLACSNF). Residues 143–264 (WFKFPRTSSK…EEGDIVYRLY (122 aa)) lie on the Cytoplasmic side of the membrane. Position 200 is a phosphothreonine (T200). S202 carries the phosphoserine modification. Phosphothreonine is present on T215. A Phosphoserine modification is found at S217. A helical membrane pass occupies residues 265–286 (MRQTIIKVIKFILIICYTVYYV). Over 287–316 (HNIKFDVDCTVDIESLTGYRTYRCAHPLAT) the chain is Extracellular. The chain crosses the membrane as a helical span at residues 317 to 341 (LFKILASFYISLVIFYGLICMYTLW). Residues 342 to 810 (WMLRRSLKKY…RLWRADKEQA (469 aa)) are Cytoplasmic-facing. LRR repeat units lie at residues 399 to 422 (ENKLRQLNLNNEWTLDKLRQRLTK), 423 to 445 (NAQDKLELHLFMLSGIPDTVFDL), 447 to 468 (ELEVLKLELIPDVTIPPSIAQL), 469 to 492 (TGLKELWLYHTAAKIEAPALAFLR), 493 to 515 (ENLRALHIKFTDIKEIPLWIYSL), 518 to 542 (LEELHLTGNLSAENNRYIVIDGLRE), 543 to 565 (LKRLKVLRLKSNLSKLPQVVTDV), 567 to 589 (VHLQKLSINNEGTKLIVLNSLKK), 590 to 613 (MANLTELELIRCDLERIPHSIFSL), 615 to 637 (NLQEIDLKDNNLKTIEEIISFQH), 639 to 661 (HRLTCLKLWYNHIAYIPIQIGNL), 662 to 684 (TNLERLYLNRNKIEKIPTQLFYC), 686 to 707 (KLRYLDLSHNNLTFLPADIGLL), 708 to 730 (QNLQNLAITANRIETLPPELFQC), 732 to 753 (KLRALHLGNNVLQSLPSRVGEL), 754 to 776 (TNLTQIELRGNRLECLPVELGEC), and 778 to 801 (LLKRSGLVVEEDLFNTLPPEVKER). Residues 706–707 (LL) carry the Di-leucine motif motif.

The protein belongs to the LRRC8 family. In terms of assembly, heterohexamer; oligomerizes with other LRRC8 proteins (LRRC8B, LRRC8C, LRRC8D and/or LRRC8E) to form a heterohexamer. Can form homohexamers in vitro, but these have lower conductance than heterohexamers. In vivo, the subunit composition may depend primarily on expression levels, and heterooligomeric channels containing various proportions of the different LRRC8 proteins may coexist. Interact with GRB2. Interacts with NOX4; this interaction prevents the ubiquitin-mediated degradation of LRRC8A. N-glycosylated. Expressed in brain, kidney, ovary, lung, liver, heart, and fetal brain and liver. Found at high levels in bone marrow; lower levels are detected in peripheral blood cells. Expressed on T-cells as well as on B-lineage cells.

The protein resides in the cell membrane. Its subcellular location is the lysosome membrane. The catalysed reaction is chloride(in) = chloride(out). It carries out the reaction iodide(out) = iodide(in). The enzyme catalyses taurine(out) = taurine(in). It catalyses the reaction L-aspartate(out) = L-aspartate(in). The catalysed reaction is L-glutamate(out) = L-glutamate(in). It carries out the reaction myo-inositol(out) = myo-inositol(in). The enzyme catalyses 2',3'-cGAMP(out) = 2',3'-cGAMP(in). With respect to regulation, inhibited by (4-[(2-butyl-6,7-dichloro-2-cyclopentyl-2,3-dihydro-1-oxo-1H-inden-5-yl)oxy]butanoic acid), which plugs the channel like a cork in a bottle by binding in the extracellular selectivity filter and sterically occluding ion conduction. Lipids may block conduction in closed heterohexameric channels. Functionally, essential component of the volume-regulated anion channel (VRAC, also named VSOAC channel), an anion channel required to maintain a constant cell volume in response to extracellular or intracellular osmotic changes. The VRAC channel conducts iodide better than chloride and can also conduct organic osmolytes like taurine. Mediates efflux of amino acids, such as aspartate and glutamate, in response to osmotic stress. LRRC8A and LRRC8D are required for the uptake of the drug cisplatin. In complex with LRRC8C or LRRC8E, acts as a transporter of immunoreactive cyclic dinucleotide GMP-AMP (2'-3'-cGAMP), an immune messenger produced in response to DNA virus in the cytosol: mediates both import and export of 2'-3'-cGAMP, thereby promoting transfer of 2'-3'-cGAMP to bystander cells. In contrast, complexes containing LRRC8D inhibit transport of 2'-3'-cGAMP. Required for in vivo channel activity, together with at least one other family member (LRRC8B, LRRC8C, LRRC8D or LRRC8E); channel characteristics depend on the precise subunit composition. Can form functional channels by itself (in vitro). Involved in B-cell development: required for the pro-B cell to pre-B cell transition. Also required for T-cell development. Required for myoblast differentiation: VRAC activity promotes membrane hyperpolarization and regulates insulin-stimulated glucose metabolism and oxygen consumption. Also acts as a regulator of glucose-sensing in pancreatic beta cells: VRAC currents, generated in response to hypotonicity- or glucose-induced beta cell swelling, depolarize cells, thereby causing electrical excitation, leading to increase glucose sensitivity and insulin secretion. Also plays a role in lysosome homeostasis by forming functional lysosomal VRAC channels in response to low cytoplasmic ionic strength condition: lysosomal VRAC channels are necessary for the formation of large lysosome-derived vacuoles, which store and then expel excess water to maintain cytosolic water homeostasis. Acts as a key factor in NLRP3 inflammasome activation by modulating itaconate efflux and mitochondria function. The polypeptide is Volume-regulated anion channel subunit LRRC8A (Homo sapiens (Human)).